A 608-amino-acid chain; its full sequence is Isocitrate dehydrogenase kinase/phosphatase (608 aa).

ATP is bound by residues 328-334 (APGIKGL) and Lys-349. Asp-384 is an active-site residue.

Belongs to the AceK family.

The protein localises to the cytoplasm. The enzyme catalyses L-seryl-[isocitrate dehydrogenase] + ATP = O-phospho-L-seryl-[isocitrate dehydrogenase] + ADP + H(+). Its function is as follows. Bifunctional enzyme which can phosphorylate or dephosphorylate isocitrate dehydrogenase (IDH) on a specific serine residue. This is a regulatory mechanism which enables bacteria to bypass the Krebs cycle via the glyoxylate shunt in response to the source of carbon. When bacteria are grown on glucose, IDH is fully active and unphosphorylated, but when grown on acetate or ethanol, the activity of IDH declines drastically concomitant with its phosphorylation. The protein is Isocitrate dehydrogenase kinase/phosphatase of Cupriavidus pinatubonensis (strain JMP 134 / LMG 1197) (Cupriavidus necator (strain JMP 134)).